The following is a 547-amino-acid chain: Glucose-6-phosphate isomerase (547 aa).

The active-site Proton donor is glutamate 352. Catalysis depends on residues histidine 383 and lysine 511.

This sequence belongs to the GPI family.

The protein localises to the cytoplasm. The catalysed reaction is alpha-D-glucose 6-phosphate = beta-D-fructose 6-phosphate. The protein operates within carbohydrate biosynthesis; gluconeogenesis. It participates in carbohydrate degradation; glycolysis; D-glyceraldehyde 3-phosphate and glycerone phosphate from D-glucose: step 2/4. Catalyzes the reversible isomerization of glucose-6-phosphate to fructose-6-phosphate. The polypeptide is Glucose-6-phosphate isomerase (Magnetococcus marinus (strain ATCC BAA-1437 / JCM 17883 / MC-1)).